The sequence spans 493 residues: Cytochrome P450 Tp9025 (493 aa).

A helical; Signal-anchor for type II membrane protein transmembrane segment spans residues 1–21; sequence MALYIIFLLIASSFILFSFIF. N-linked (GlcNAc...) asparagine glycosylation is found at Asn-209 and Asn-411. Cys-433 is a heme binding site.

This sequence belongs to the cytochrome P450 family. Heme is required as a cofactor.

The protein localises to the membrane. It functions in the pathway secondary metabolite biosynthesis; terpenoid biosynthesis. Probably involved in the biosynthesis of germacrene-derived sesquiterpene lactones. The polypeptide is Cytochrome P450 Tp9025 (Tanacetum parthenium (Feverfew)).